A 679-amino-acid polypeptide reads, in one-letter code: Translation initiation factor IF-2 (679 aa).

A tr-type G domain is found at 178-347 (KRPPIITVMG…LLTSEMQELK (170 aa)). Residues 187–194 (GHVDHGKT) are G1. 187–194 (GHVDHGKT) contacts GTP. The interval 212-216 (GITQH) is G2. A G3 region spans residues 233–236 (DTPG). GTP contacts are provided by residues 233–237 (DTPGH) and 287–290 (NKMD). The interval 287 to 290 (NKMD) is G4. Positions 323-325 (SAK) are G5.

The protein belongs to the TRAFAC class translation factor GTPase superfamily. Classic translation factor GTPase family. IF-2 subfamily.

The protein localises to the cytoplasm. Its function is as follows. One of the essential components for the initiation of protein synthesis. Protects formylmethionyl-tRNA from spontaneous hydrolysis and promotes its binding to the 30S ribosomal subunits. Also involved in the hydrolysis of GTP during the formation of the 70S ribosomal complex. This is Translation initiation factor IF-2 from Clostridium perfringens (strain ATCC 13124 / DSM 756 / JCM 1290 / NCIMB 6125 / NCTC 8237 / Type A).